Consider the following 370-residue polypeptide: Probable endopolygalacturonase A (370 aa).

The N-terminal stretch at 1 to 19 is a signal peptide; sequence MPSAKPLFCLATLAGAALA. A propeptide spanning residues 20–32 is cleaved from the precursor; the sequence is APAPSRATDFNKR. The cysteines at positions 35 and 50 are disulfide-linked. PbH1 repeat units lie at residues 162-192, 193-214, 215-235, 244-265, 273-295, and 307-352; these read SDNLVIEDVTIDNSDGDSEGGHNTDGFDISE, STYITITGATVKNQDDCVAINS, GENIYFSGGTCSGGHGLSIGS, VKNVTFIDSTVSDSENGVRIKT, VEDITYSNIQLSGISDYGIVIEQ, and SNGV…DITG. Asp-207 serves as the catalytic Proton donor. Cys-209 and Cys-225 are disulfide-bonded. His-229 is a catalytic residue. Asn-246 carries N-linked (GlcNAc...) asparagine glycosylation. Disulfide bonds link Cys-335–Cys-340 and Cys-359–Cys-368.

Belongs to the glycosyl hydrolase 28 family.

Its subcellular location is the secreted. It catalyses the reaction (1,4-alpha-D-galacturonosyl)n+m + H2O = (1,4-alpha-D-galacturonosyl)n + (1,4-alpha-D-galacturonosyl)m.. In terms of biological role, involved in maceration and soft-rotting of plant tissue. Hydrolyzes the 1,4-alpha glycosidic bonds of de-esterified pectate in the smooth region of the plant cell wall. The sequence is that of Probable endopolygalacturonase A (pgaA) from Aspergillus kawachii (strain NBRC 4308) (White koji mold).